A 103-amino-acid polypeptide reads, in one-letter code: Small ribosomal subunit protein uS10 (103 aa).

This sequence belongs to the universal ribosomal protein uS10 family. Part of the 30S ribosomal subunit.

Involved in the binding of tRNA to the ribosomes. The sequence is that of Small ribosomal subunit protein uS10 from Chlorobaculum tepidum (strain ATCC 49652 / DSM 12025 / NBRC 103806 / TLS) (Chlorobium tepidum).